The following is a 196-amino-acid chain: Pyridoxal 5'-phosphate synthase subunit PdxT (196 aa).

47–49 (GES) is an L-glutamine binding site. The Nucleophile role is filled by Cys-79. Residues Arg-106 and 134 to 135 (IR) each bind L-glutamine. Active-site charge relay system residues include His-170 and Glu-172.

It belongs to the glutaminase PdxT/SNO family. In terms of assembly, in the presence of PdxS, forms a dodecamer of heterodimers. Only shows activity in the heterodimer.

The enzyme catalyses aldehydo-D-ribose 5-phosphate + D-glyceraldehyde 3-phosphate + L-glutamine = pyridoxal 5'-phosphate + L-glutamate + phosphate + 3 H2O + H(+). It catalyses the reaction L-glutamine + H2O = L-glutamate + NH4(+). Its pathway is cofactor biosynthesis; pyridoxal 5'-phosphate biosynthesis. Its function is as follows. Catalyzes the hydrolysis of glutamine to glutamate and ammonia as part of the biosynthesis of pyridoxal 5'-phosphate. The resulting ammonia molecule is channeled to the active site of PdxS. This Bacillus thuringiensis subsp. konkukian (strain 97-27) protein is Pyridoxal 5'-phosphate synthase subunit PdxT.